The sequence spans 281 residues: MFSGLTLNCVLLLLQLLLARSLENAYVFEVGKNAYLPCSYTLSTPGALVPMCWGKGFCPWSQCTNELLRTDERNVTYQKSSRYQLKGDLNKGDVSLIIKNVTLDDHGTYCCRIQFPGLMNDKKLELKLDIKAAKVTPAQTAHGDSTTASPRTLTTERNGSETQTLVTLHNNNGTKISTWADEIKDSGETIRTAIHIGVGVSAGLTLALIIGVLILKWYSCKKKKLSSLSLITLANLPPGGLANAGAVRIRSEENIYTIEENVYEVENSNEYYCYVNSQQPS.

The first 19 residues, 1-19 (MFSGLTLNCVLLLLQLLLA), serve as a signal peptide directing secretion. The Ig-like V-type domain occupies 20 to 125 (RSLENAYVFE…PGLMNDKKLE (106 aa)). The Extracellular portion of the chain corresponds to 20 to 193 (RSLENAYVFE…KDSGETIRTA (174 aa)). Disulfide bonds link cysteine 38-cysteine 111, cysteine 52-cysteine 63, and cysteine 58-cysteine 110. The a 1,2-diacyl-sn-glycero-3-phospho-L-serine site is built by serine 61 and glutamine 62. N-linked (GlcNAc...) asparagine glycosylation is found at asparagine 74 and asparagine 100. Residue arginine 112 participates in a 1,2-diacyl-sn-glycero-3-phospho-L-serine binding. 2 residues coordinate Ca(2+): phenylalanine 115 and glycine 117. Position 119 (methionine 119) interacts with a 1,2-diacyl-sn-glycero-3-phospho-L-serine. Residue asparagine 120 participates in Ca(2+) binding. A disordered region spans residues 139 to 160 (QTAHGDSTTASPRTLTTERNGS). Threonine 146 carries an O-linked (GalNAc...) threonine glycan. A glycan (N-linked (GlcNAc...) asparagine) is linked at asparagine 172. Residues 194 to 214 (IHIGVGVSAGLTLALIIGVLI) form a helical membrane-spanning segment. The Cytoplasmic segment spans residues 215–281 (LKWYSCKKKK…YCYVNSQQPS (67 aa)). The tract at residues 252–270 (EENIYTIEENVYEVENSNE) is interaction with BAG6. Tyrosine 256 bears the Phosphotyrosine; by ITK mark.

This sequence belongs to the immunoglobulin superfamily. TIM family. In terms of assembly, interacts with HMGB1; impairs HMGB1 binding to B-DNA and likely HMGB1-mediated innate immune response. Interacts with BAG6. Interacts (phosphorylated) with PIK3R1 and PIK3R2. Interacts (not dependent on its phosphorylation status) with FYN. Interacts (in basal state T-cells) with VAV1; AKT1/2, LCP2, ZAP70, SYK, PIK3R1, FYN, SH3BP2 and SH2D2A. Interacts (in activated T-cells) with LCK and PLCG. Interacts with ILF3; this interaction promotes ILF3 ubiquitination and degradation. In terms of processing, phosphorylated on tyrosine residues; modestly increased after TCR/CD28 stimulation. Can be phosphorylated in the cytoplasmic domain by FYN. Phosphorylation at Tyr-256 is increased by stimulation with ligand LGALS9. N-glycosylated. Expressed in T-helper type 1 lymphocytes. Not expressed by naive T-cells but up-regulated as they differentiate into T-helper-1 cells. Also expressed by differentiated type 1 CD8+ cytotoxic T-cells. Expressed on peritoneal exudate macrophages, monocytes, and splenic dendritic cells (DCs). Expression on natural killer (NK) cells is inversely associated with IFN-gamma production during the initial 24 hours of LPS-induced endotoxic shock. Expressed on mast cells.

The protein resides in the membrane. It localises to the cell junction. The protein localises to the secreted. Cell surface receptor implicated in modulating innate and adaptive immune responses. Generally accepted to have an inhibiting function. Reports on stimulating functions suggest that the activity may be influenced by the cellular context and/or the respective ligand. Regulates macrophage activation. Inhibits T-helper type 1 lymphocyte (Th1)-mediated auto- and alloimmune responses and promotes immunological tolerance. In CD8+ cells attenuates TCR-induced signaling, specifically by blocking NF-kappaB and NFAT promoter activities resulting in the loss of IL-2 secretion. The function may implicate its association with LCK proposed to impair phosphorylation of TCR subunits. In contrast, shown to activate TCR-induced signaling in T-cells probably implicating ZAP70, LCP2, LCK and FYN. Expressed on Treg cells can inhibit Th17 cell responses. Receptor for LGALS9. Binding to LGALS9 is believed to result in suppression of T-cell responses; the resulting apoptosis of antigen-specific cells may implicate HAVCR2 phosphorylation and disruption of its association with BAG6. Binding to LGALS9 is proposed to be involved in innate immune response to intracellular pathogens. Expressed on Th1 cells interacts with LGALS9 expressed on Mycobacterium tuberculosis-infected macrophages to stimulate antibactericidal activity including IL-1 beta secretion and to restrict intracellular bacterial growth. However, the function as receptor for LGALS9 has been challenged. Also reported to enhance CD8+ T-cell responses to an acute infection such as by Listeria monocytogenes. Receptor for phosphatidylserine (PtSer); PtSer-binding is calcium-dependent. May recognize PtSer on apoptotic cells leading to their phagocytosis. Mediates the engulfment of apoptotic cells by dendritic cells. Expressed on T-cells, promotes conjugation but not engulfment of apoptotic cells. Expressed on dendritic cells (DCs) positively regulates innate immune response and in synergy with Toll-like receptors promotes secretion of TNF-alpha. In tumor-imfiltrating DCs suppresses nucleic acid-mediated innate immune repsonse by interaction with HMGB1 and interfering with nucleic acid-sensing and trafficking of nucleid acids to endosomes. Can enhance mast cell production of Th2 cytokines Il-4, IL-6 and IL-13. Expressed on natural killer (NK) cells acts as a coreceptor to enhance IFN-gamma production in response to LGALS9. In contrast, shown to suppress NK cell-mediated cytotoxicity. Negatively regulates NK cell function in LPS-induced endotoxic shock. The polypeptide is Hepatitis A virus cellular receptor 2 homolog (Havcr2) (Mus musculus (Mouse)).